The primary structure comprises 263 residues: 3-methyl-2-oxobutanoate hydroxymethyltransferase (263 aa).

2 residues coordinate Mg(2+): aspartate 43 and aspartate 82. Residues 43-44 (DS), aspartate 82, and lysine 111 each bind 3-methyl-2-oxobutanoate. Glutamate 113 is a binding site for Mg(2+). The active-site Proton acceptor is glutamate 179.

This sequence belongs to the PanB family. As to quaternary structure, homodecamer; pentamer of dimers. Mg(2+) is required as a cofactor.

It is found in the cytoplasm. It catalyses the reaction 3-methyl-2-oxobutanoate + (6R)-5,10-methylene-5,6,7,8-tetrahydrofolate + H2O = 2-dehydropantoate + (6S)-5,6,7,8-tetrahydrofolate. It participates in cofactor biosynthesis; (R)-pantothenate biosynthesis; (R)-pantoate from 3-methyl-2-oxobutanoate: step 1/2. Its function is as follows. Catalyzes the reversible reaction in which hydroxymethyl group from 5,10-methylenetetrahydrofolate is transferred onto alpha-ketoisovalerate to form ketopantoate. The chain is 3-methyl-2-oxobutanoate hydroxymethyltransferase from Neisseria meningitidis serogroup A / serotype 4A (strain DSM 15465 / Z2491).